Consider the following 534-residue polypeptide: CTP synthase (534 aa).

An amidoligase domain region spans residues 1–267 (MTKYIFVTGG…DQIVCDHLKL (267 aa)). Serine 13 provides a ligand contact to CTP. Serine 13 is a binding site for UTP. Position 14–19 (14–19 (SIGKGI)) interacts with ATP. Residue tyrosine 54 participates in L-glutamine binding. Aspartate 71 is an ATP binding site. Aspartate 71 and glutamate 141 together coordinate Mg(2+). CTP-binding positions include 148 to 150 (DIE), 188 to 193 (KTKPTQ), and lysine 224. UTP is bound by residues 188–193 (KTKPTQ) and lysine 224. 240-242 (RDV) contributes to the ATP binding site. The 243-residue stretch at 292–534 (KIALVGKYVE…FVTAAIKNSN (243 aa)) folds into the Glutamine amidotransferase type-1 domain. An L-glutamine-binding site is contributed by glycine 354. The active-site Nucleophile; for glutamine hydrolysis is the cysteine 381. L-glutamine contacts are provided by residues 382 to 385 (LGMQ), glutamate 405, and arginine 463. Residues histidine 508 and glutamate 510 contribute to the active site.

This sequence belongs to the CTP synthase family. In terms of assembly, homotetramer.

The enzyme catalyses UTP + L-glutamine + ATP + H2O = CTP + L-glutamate + ADP + phosphate + 2 H(+). The catalysed reaction is L-glutamine + H2O = L-glutamate + NH4(+). It carries out the reaction UTP + NH4(+) + ATP = CTP + ADP + phosphate + 2 H(+). It functions in the pathway pyrimidine metabolism; CTP biosynthesis via de novo pathway; CTP from UDP: step 2/2. With respect to regulation, allosterically activated by GTP, when glutamine is the substrate; GTP has no effect on the reaction when ammonia is the substrate. The allosteric effector GTP functions by stabilizing the protein conformation that binds the tetrahedral intermediate(s) formed during glutamine hydrolysis. Inhibited by the product CTP, via allosteric rather than competitive inhibition. Its function is as follows. Catalyzes the ATP-dependent amination of UTP to CTP with either L-glutamine or ammonia as the source of nitrogen. Regulates intracellular CTP levels through interactions with the four ribonucleotide triphosphates. The polypeptide is CTP synthase (Streptococcus pyogenes serotype M4 (strain MGAS10750)).